Here is a 128-residue protein sequence, read N- to C-terminus: Diacylglycerol kinase (128 aa).

An a divalent metal cation-binding site is contributed by Glu34. 2 helical membrane-spanning segments follow: residues 35-55 and 58-78; these read SAFR…SYLA and FLEW…ELIN. Residue Glu75 is the Proton acceptor of the active site. Glu82 contacts a divalent metal cation. Residues 107-127 form a helical membrane-spanning segment; it reads QLIGLIFWTLIWGRYLLALYL.

The protein belongs to the bacterial diacylglycerol kinase family. The cofactor is Mg(2+).

The protein resides in the cell inner membrane. The catalysed reaction is a 1,2-diacyl-sn-glycerol + ATP = a 1,2-diacyl-sn-glycero-3-phosphate + ADP + H(+). Functionally, catalyzes the ATP-dependent phosphorylation of sn-l,2-diacylglycerol (DAG) to phosphatidic acid. Involved in the recycling of diacylglycerol produced as a by-product during membrane-derived oligosaccharide (MDO) biosynthesis. The polypeptide is Diacylglycerol kinase (dgkA) (Helicobacter pylori (strain ATCC 700392 / 26695) (Campylobacter pylori)).